The chain runs to 500 residues: Lysine--tRNA ligase (500 aa).

Mg(2+)-binding residues include Glu-407 and Glu-414.

It belongs to the class-II aminoacyl-tRNA synthetase family. As to quaternary structure, homodimer. It depends on Mg(2+) as a cofactor.

It localises to the cytoplasm. It carries out the reaction tRNA(Lys) + L-lysine + ATP = L-lysyl-tRNA(Lys) + AMP + diphosphate. This is Lysine--tRNA ligase from Azobacteroides pseudotrichonymphae genomovar. CFP2.